We begin with the raw amino-acid sequence, 574 residues long: 3-hydroxy-3-methylglutaryl-coenzyme A reductase 3 (574 aa).

The tract at residues 1–30 (MDVRRRPVKPLYPSEHISSGEPLKPHNQDS) is disordered. The chain crosses the membrane as a helical span at residues 41 to 61 (PLYLTNGLFFTMFFSVMYFLL). N78 is a glycosylation site (N-linked (GlcNAc...) asparagine). Residues 83–103 (VAMVSLIASVIYLLGFFGIGF) traverse the membrane as a helical segment. The interval 104–161 (VQSFVSKGNNDSWDVEDESPEQFIDRTVTPPPVRRNIPMKSVPVAEKTAQIITPFSSE) is linker. N113 carries N-linked (GlcNAc...) asparagine glycosylation. Residues 162–574 (DDEVVIKSVV…YNRSCKDVTK (413 aa)) form a catalytic region. E256 acts as the Charge relay system in catalysis. The N-linked (GlcNAc...) asparagine glycan is linked to N320. K388 functions as the Charge relay system in the catalytic mechanism. An N-linked (GlcNAc...) asparagine glycan is attached at N433. The Charge relay system role is filled by D464. Residue H562 is the Proton donor of the active site. Residue N566 is glycosylated (N-linked (GlcNAc...) asparagine).

This sequence belongs to the HMG-CoA reductase family. In terms of tissue distribution, expressed in mature petals and anthers.

The protein localises to the endoplasmic reticulum membrane. The catalysed reaction is (R)-mevalonate + 2 NADP(+) + CoA = (3S)-3-hydroxy-3-methylglutaryl-CoA + 2 NADPH + 2 H(+). It participates in metabolic intermediate biosynthesis; (R)-mevalonate biosynthesis; (R)-mevalonate from acetyl-CoA: step 3/3. Functionally, catalyzes the synthesis of mevalonate. The specific precursor of all isoprenoid compounds present in plants. The polypeptide is 3-hydroxy-3-methylglutaryl-coenzyme A reductase 3 (HMG3) (Solanum tuberosum (Potato)).